We begin with the raw amino-acid sequence, 462 residues long: MANASQLSPTNKHFFKPLLPGFQRNLNIPVKFFSEHIEGKHEGETVKLRADASKRTWEVKMDGNRLTEGWKEFVEAHDLRIRDFVVFRHEGDMVFHVTALGPSCCEIQYPQSISHEEGEESGEVEISEREVEENLQKEYDQSSADLNCFSQSVTHSNISNDLVTLPRDFAKRNGLDKGMHEIVLMNEEGKSWESEVRSRMSGQVFIVGGWKSLCSENKLKGGDSCTFKLLQNAKTPVFQLCSRIGESRFVKLTPTLNSLEIGKQHLPVSFTKGNGLIHPGEIILVDKDRVEWSMKLQVDNRGGMHIFGGNDWKSFCAANEVGAGESLTLELIRGGLSPLFKFFSKIEQPSFEAEDRRHKRARVHNGSQETDKGEPSRATKMGPELEKREKTAEKGEPSRASNKSSGKQGNLQKTQACSVTDHVAKVKESVVDTLTSIRRFQAELETMEQKLEDSLQEINKLS.

DNA-binding regions (TF-B3) lie at residues 11-103, 148-243, and 249-346; these read NKHF…LGPS, CFSQ…LCSR, and FVKL…FSKI. A disordered region spans residues 351–419; sequence FEAEDRRHKR…NLQKTQACSV (69 aa). Over residues 369-397 the composition is skewed to basic and acidic residues; sequence ETDKGEPSRATKMGPELEKREKTAEKGEP. The span at 399–418 shows a compositional bias: polar residues; it reads RASNKSSGKQGNLQKTQACS.

It localises to the nucleus. The polypeptide is B3 domain-containing protein REM8 (REM8) (Arabidopsis thaliana (Mouse-ear cress)).